The chain runs to 254 residues: HLA class II histocompatibility antigen, DQ alpha 1 chain (254 aa).

An N-terminal signal peptide occupies residues 1–23; sequence MILNKALMLGALALTTVMSPCGG. The tract at residues 24–119 is alpha-1; the sequence is EDIVADHVAS…EVPEVTVFSK (96 aa). The Extracellular segment spans residues 24–216; sequence EDIVADHVAS…IPAPMSELTE (193 aa). 2 N-linked (GlcNAc...) asparagine glycosylation sites follow: Asn103 and Asn143. One can recognise an Ig-like C1-type domain in the interval 112-204; that stretch reads PEVTVFSKSP…LDKPLLKHWE (93 aa). The tract at residues 120-203 is alpha-2; the sequence is SPVTLGQPNI…GLDKPLLKHW (84 aa). A disulfide bridge links Cys132 with Cys188. The interval 204-216 is connecting peptide; it reads EPEIPAPMSELTE. The chain crosses the membrane as a helical span at residues 217-239; the sequence is TVVCALGLSVGLVGIVVGTVFII. The Cytoplasmic portion of the chain corresponds to 240–254; sequence RGLRSVGASRHQGPL.

This sequence belongs to the MHC class II family. In terms of assembly, heterodimer of an alpha and a beta subunit; also referred as MHC class II molecule. In the endoplasmic reticulum (ER) it forms a heterononamer; 3 MHC class II molecules bind to a CD74 homotrimer (also known as invariant chain or HLA class II histocompatibility antigen gamma chain). In the endosomal/lysosomal system; CD74 undergoes sequential degradation by various proteases; leaving a small fragment termed CLIP on each MHC class II molecule. MHC class II molecule interacts with HLA_DM, and HLA_DO in B-cells, in order to release CLIP and facilitate the binding of antigenic peptides.

Its subcellular location is the cell membrane. It is found in the endoplasmic reticulum membrane. The protein resides in the golgi apparatus. It localises to the trans-Golgi network membrane. The protein localises to the endosome membrane. Its subcellular location is the lysosome membrane. Its function is as follows. Binds peptides derived from antigens that access the endocytic route of antigen presenting cells (APC) and presents them on the cell surface for recognition by the CD4 T-cells. The peptide binding cleft accommodates peptides of 10-30 residues. The peptides presented by MHC class II molecules are generated mostly by degradation of proteins that access the endocytic route, where they are processed by lysosomal proteases and other hydrolases. Exogenous antigens that have been endocytosed by the APC are thus readily available for presentation via MHC II molecules, and for this reason this antigen presentation pathway is usually referred to as exogenous. As membrane proteins on their way to degradation in lysosomes as part of their normal turn-over are also contained in the endosomal/lysosomal compartments, exogenous antigens must compete with those derived from endogenous components. Autophagy is also a source of endogenous peptides, autophagosomes constitutively fuse with MHC class II loading compartments. In addition to APCs, other cells of the gastrointestinal tract, such as epithelial cells, express MHC class II molecules and CD74 and act as APCs, which is an unusual trait of the GI tract. To produce a MHC class II molecule that presents an antigen, three MHC class II molecules (heterodimers of an alpha and a beta chain) associate with a CD74 trimer in the ER to form a heterononamer. Soon after the entry of this complex into the endosomal/lysosomal system where antigen processing occurs, CD74 undergoes a sequential degradation by various proteases, including CTSS and CTSL, leaving a small fragment termed CLIP (class-II-associated invariant chain peptide). The removal of CLIP is facilitated by HLA-DM via direct binding to the alpha-beta-CLIP complex so that CLIP is released. HLA-DM stabilizes MHC class II molecules until primary high affinity antigenic peptides are bound. The MHC II molecule bound to a peptide is then transported to the cell membrane surface. In B-cells, the interaction between HLA-DM and MHC class II molecules is regulated by HLA-DO. Primary dendritic cells (DCs) also to express HLA-DO. Lysosomal microenvironment has been implicated in the regulation of antigen loading into MHC II molecules, increased acidification produces increased proteolysis and efficient peptide loading. The chain is HLA class II histocompatibility antigen, DQ alpha 1 chain (HLA-DQA1) from Homo sapiens (Human).